An 835-amino-acid chain; its full sequence is BCL11 transcription factor A (835 aa).

Residues 1 to 12 (MSRRKQGKPQHL) are compositionally biased toward basic residues. Residues 1–41 (MSRRKQGKPQHLSKREFSPEPLEAILTDDEPDHGPLGAPEG) form a disordered region. The tract at residues 1 to 210 (MSRRKQGKPQ…SEHGSPLTPR (210 aa)) is required for nuclear body formation and for SUMO1 recruitment. The C2HC-type zinc finger occupies 45 to 71 (LLTCGQCQMNFPLGDILIFIEHKRKQC). Zn(2+) is bound by residues cysteine 48, cysteine 51, histidine 66, and cysteine 71. The residue at position 86 (serine 86) is a Phosphoserine. Residue lysine 123 forms a Glycyl lysine isopeptide (Lys-Gly) (interchain with G-Cter in SUMO2) linkage. At isoleucine 162 the chain carries Phosphothreonine. Lysine 164 participates in a covalent cross-link: Glycyl lysine isopeptide (Lys-Gly) (interchain with G-Cter in SUMO2). The C2H2-type 1 zinc finger occupies 170–193 (YTCTTCKQPFTSAWFLLQHAQNTH). At serine 205 the chain carries Phosphoserine. A Phosphothreonine modification is found at proline 214. Arginine 271 is modified (asymmetric dimethylarginine). The segment at 323–376 (AGNTSSPPLSPGRPSPMQRLLQPFQPGSKPPFLATPPLPPLQSAPPPSQPPVKS) is disordered. A phosphoserine mark is found at serine 332 and serine 337. The segment covering 355–372 (LATPPLPPLQSAPPPSQP) has biased composition (pro residues). C2H2-type zinc fingers lie at residues 377-399 (KSCE…RRSH) and 405-429 (YKCN…THMH). Residues 421–430 (KRHMKTHMHK) show a composition bias toward basic residues. Disordered regions lie at residues 421–458 (KRHM…LVGS), 471–512 (KSEN…ERVD), and 572–619 (RSHL…GLSK). Residues 441–450 (GLSTASSPEP) show a composition bias toward polar residues. Phosphoserine occurs at positions 446 and 447. Acidic residues predominate over residues 482 to 506 (NGDEEEEEDDEEEEEEEEEEEEELT). A compositionally biased stretch (basic and acidic residues) spans 574–584 (HLAEAEGHRDT). Serine 608 is modified (phosphoserine). Residue lysine 620 forms a Glycyl lysine isopeptide (Lys-Gly) (interchain with G-Cter in SUMO2) linkage. 2 positions are modified to phosphoserine: serine 625 and serine 630. Lysine 634 is covalently cross-linked (Glycyl lysine isopeptide (Lys-Gly) (interchain with G-Cter in SUMO1)). Residues 682 to 696 (SPFASSSEHSSENGS) show a composition bias toward low complexity. Threonine 701 is subject to Phosphothreonine. Positions 706-720 (LDGGISGRSGTGSGG) are enriched in gly residues. Residues 737–835 (EGRRSDTCEY…RVLNNDIKTE (99 aa)) are DNA-binding. The segment at 742–764 (DTCEYCGKVFKNCSNLTVHRRSH) adopts a C2H2-type 4 zinc-finger fold. Zn(2+) contacts are provided by cysteine 744, cysteine 747, histidine 760, and histidine 764. Positions 764–773 (HTGERPYKCE) are enriched in polar residues. The disordered stretch occupies residues 765-769 (TGERP). The C2H2-type 5 zinc finger occupies 770–792 (YKCELCNYACAQSSKLTRHMKTH). Residues cysteine 772, cysteine 775, histidine 788, and histidine 792 each coordinate Zn(2+). The segment at 793-799 (GQVGKDV) is disordered. The C2H2-type 6 zinc finger occupies 800–823 (YKCEICKMPFSVYSTLEKHMKKWH). 4 residues coordinate Zn(2+): cysteine 802, cysteine 805, histidine 818, and histidine 823.

In terms of assembly, homotetrameric; self-associates via C2HC-type zinc finger domain. Interacts with MTA2, a component of the nucleosome remodeling and deacetylase (NuRD) repressor complex. Interacts with NR2F1, PIAS3, NR2F2 and NR2F6. Interacts with TBR1. In terms of processing, sumoylated with SUMO1. In terms of tissue distribution, isoforms are expressed in a tissue-specific fashion. Isoforms 1, isoform 2, and isoform 3 are expressed at similar levels in testis, kidney and spleen. Isoform 1 is expressed in the stomach, and isoform 2 is expressed exclusively in the lung. Overexpression following proviral integration in hematopoietic cells results in the generation of myeloid leukemia.

It localises to the cytoplasm. The protein resides in the nucleus. Its function is as follows. Transcription factor. Associated with the BAF SWI/SNF chromatin remodeling complex. Binds to the 5'-TGACCA-3' sequence motif in regulatory regions of target genes. Involved in brain development. May play a role in hematopoiesis. Essential factor in lymphopoiesis, required for B-cell formation in fetal liver. May function as a modulator of the transcriptional repression activity of NR2F2. The sequence is that of BCL11 transcription factor A (Bcl11a) from Mus musculus (Mouse).